Here is a 318-residue protein sequence, read N- to C-terminus: Ribose-phosphate pyrophosphokinase (318 aa).

ATP contacts are provided by residues 40 to 42 (DGE) and 99 to 100 (RQ). Mg(2+)-binding residues include histidine 134 and aspartate 173. Lysine 196 is an active-site residue. D-ribose 5-phosphate contacts are provided by residues arginine 198, aspartate 222, and 226 to 230 (DTAGT).

The protein belongs to the ribose-phosphate pyrophosphokinase family. Class I subfamily. In terms of assembly, homohexamer. The cofactor is Mg(2+).

The protein resides in the cytoplasm. The catalysed reaction is D-ribose 5-phosphate + ATP = 5-phospho-alpha-D-ribose 1-diphosphate + AMP + H(+). It functions in the pathway metabolic intermediate biosynthesis; 5-phospho-alpha-D-ribose 1-diphosphate biosynthesis; 5-phospho-alpha-D-ribose 1-diphosphate from D-ribose 5-phosphate (route I): step 1/1. Its function is as follows. Involved in the biosynthesis of the central metabolite phospho-alpha-D-ribosyl-1-pyrophosphate (PRPP) via the transfer of pyrophosphoryl group from ATP to 1-hydroxyl of ribose-5-phosphate (Rib-5-P). The sequence is that of Ribose-phosphate pyrophosphokinase from Burkholderia pseudomallei (strain K96243).